A 395-amino-acid chain; its full sequence is [LysW]-aminoadipate semialdehyde transaminase (395 aa).

Residues 113-114 and Phe140 each bind pyridoxal 5'-phosphate; that span reads GT. Residue Arg143 participates in substrate binding. Residue 225-228 participates in pyridoxal 5'-phosphate binding; sequence DEIQ. At Lys254 the chain carries N6-(pyridoxal phosphate)lysine. Residue Thr282 coordinates substrate. Thr283 provides a ligand contact to pyridoxal 5'-phosphate.

The protein belongs to the class-III pyridoxal-phosphate-dependent aminotransferase family. LysJ subfamily. Homodimer. Pyridoxal 5'-phosphate serves as cofactor.

The protein resides in the cytoplasm. It catalyses the reaction [amino-group carrier protein]-C-terminal-gamma-(L-lysyl)-L-glutamate + 2-oxoglutarate = [amino-group carrier protein]-C-terminal-N-(1-carboxy-5-oxopentan-1-yl)-L-glutamine + L-glutamate. The protein operates within amino-acid biosynthesis; L-lysine biosynthesis via AAA pathway; L-lysine from L-alpha-aminoadipate (Thermus route): step 4/5. In terms of biological role, catalyzes the transfer of the amino group of L-glutamate to [LysW]-aminoadipate 6-semialdehyde, generating [LysW]-gamma-L-lysine. This Thermus thermophilus (strain ATCC 27634 / DSM 579 / HB8) protein is [LysW]-aminoadipate semialdehyde transaminase.